Consider the following 616-residue polypeptide: Dihydroxy-acid dehydratase (616 aa).

A Mg(2+)-binding site is contributed by Asp81. Cys122 provides a ligand contact to [2Fe-2S] cluster. Asp123 and Lys124 together coordinate Mg(2+). Lys124 is modified (N6-carboxylysine). Cys195 lines the [2Fe-2S] cluster pocket. Mg(2+) is bound at residue Glu491. Ser517 serves as the catalytic Proton acceptor.

This sequence belongs to the IlvD/Edd family. Homodimer. [2Fe-2S] cluster is required as a cofactor. The cofactor is Mg(2+).

It carries out the reaction (2R)-2,3-dihydroxy-3-methylbutanoate = 3-methyl-2-oxobutanoate + H2O. The enzyme catalyses (2R,3R)-2,3-dihydroxy-3-methylpentanoate = (S)-3-methyl-2-oxopentanoate + H2O. Its pathway is amino-acid biosynthesis; L-isoleucine biosynthesis; L-isoleucine from 2-oxobutanoate: step 3/4. It participates in amino-acid biosynthesis; L-valine biosynthesis; L-valine from pyruvate: step 3/4. In terms of biological role, functions in the biosynthesis of branched-chain amino acids. Catalyzes the dehydration of (2R,3R)-2,3-dihydroxy-3-methylpentanoate (2,3-dihydroxy-3-methylvalerate) into 2-oxo-3-methylpentanoate (2-oxo-3-methylvalerate) and of (2R)-2,3-dihydroxy-3-methylbutanoate (2,3-dihydroxyisovalerate) into 2-oxo-3-methylbutanoate (2-oxoisovalerate), the penultimate precursor to L-isoleucine and L-valine, respectively. In Escherichia coli O7:K1 (strain IAI39 / ExPEC), this protein is Dihydroxy-acid dehydratase.